A 318-amino-acid polypeptide reads, in one-letter code: Methionyl-tRNA formyltransferase (318 aa).

112 to 115 (SILP) provides a ligand contact to (6S)-5,6,7,8-tetrahydrofolate.

The protein belongs to the Fmt family.

It catalyses the reaction L-methionyl-tRNA(fMet) + (6R)-10-formyltetrahydrofolate = N-formyl-L-methionyl-tRNA(fMet) + (6S)-5,6,7,8-tetrahydrofolate + H(+). Its function is as follows. Attaches a formyl group to the free amino group of methionyl-tRNA(fMet). The formyl group appears to play a dual role in the initiator identity of N-formylmethionyl-tRNA by promoting its recognition by IF2 and preventing the misappropriation of this tRNA by the elongation apparatus. The chain is Methionyl-tRNA formyltransferase from Shewanella oneidensis (strain ATCC 700550 / JCM 31522 / CIP 106686 / LMG 19005 / NCIMB 14063 / MR-1).